The chain runs to 363 residues: U-box domain-containing protein 62 (363 aa).

The disordered stretch occupies residues 74–117 (KPIIGNPNDSGGSDGEDDVDVEEEDEDDDLDGNEGDIGMNKDAG). The span at 87–107 (DGEDDVDVEEEDEDDDLDGNE) shows a compositional bias: acidic residues. A U-box domain is found at 181–253 (SLRTILSDPT…QAFCREENSQ (73 aa)). The tract at residues 343 to 363 (AKAPEDPSAKATPNKMVSNWL) is disordered.

It carries out the reaction S-ubiquitinyl-[E2 ubiquitin-conjugating enzyme]-L-cysteine + [acceptor protein]-L-lysine = [E2 ubiquitin-conjugating enzyme]-L-cysteine + N(6)-ubiquitinyl-[acceptor protein]-L-lysine.. The protein operates within protein modification; protein ubiquitination. Its function is as follows. Functions as an E3 ubiquitin ligase. The polypeptide is U-box domain-containing protein 62 (PUB62) (Arabidopsis thaliana (Mouse-ear cress)).